The following is a 340-amino-acid chain: tRNA N6-adenosine threonylcarbamoyltransferase (340 aa).

Residues histidine 114 and histidine 118 each contribute to the Fe cation site. Substrate-binding positions include 140 to 144 (TISGG), aspartate 173, glycine 186, aspartate 190, and asparagine 281. Aspartate 309 contacts Fe cation.

Belongs to the KAE1 / TsaD family. Fe(2+) is required as a cofactor.

The protein resides in the cytoplasm. The catalysed reaction is L-threonylcarbamoyladenylate + adenosine(37) in tRNA = N(6)-L-threonylcarbamoyladenosine(37) in tRNA + AMP + H(+). In terms of biological role, required for the formation of a threonylcarbamoyl group on adenosine at position 37 (t(6)A37) in tRNAs that read codons beginning with adenine. Is involved in the transfer of the threonylcarbamoyl moiety of threonylcarbamoyl-AMP (TC-AMP) to the N6 group of A37, together with TsaE and TsaB. TsaD likely plays a direct catalytic role in this reaction. In Christiangramia forsetii (strain DSM 17595 / CGMCC 1.15422 / KT0803) (Gramella forsetii), this protein is tRNA N6-adenosine threonylcarbamoyltransferase.